We begin with the raw amino-acid sequence, 350 residues long: D-alanine--D-alanine ligase (350 aa).

The ATP-grasp domain maps to 135 to 335 (KLYAKNLGVK…LAQSLPKTPK (201 aa)). Position 164-219 (164-219 (KPSFNFPFIVKPNNAGSSLGVSVVKEEKELAYALDGAFEYSKEVLIEPFIQRVKEY)) interacts with ATP. Positions 291, 303, and 305 each coordinate Mg(2+).

This sequence belongs to the D-alanine--D-alanine ligase family. It depends on Mg(2+) as a cofactor. The cofactor is Mn(2+).

The protein resides in the cytoplasm. It carries out the reaction 2 D-alanine + ATP = D-alanyl-D-alanine + ADP + phosphate + H(+). It participates in cell wall biogenesis; peptidoglycan biosynthesis. Cell wall formation. This is D-alanine--D-alanine ligase from Helicobacter acinonychis (strain Sheeba).